The chain runs to 215 residues: ATP phosphoribosyltransferase (215 aa).

It belongs to the ATP phosphoribosyltransferase family. Short subfamily. Heteromultimer composed of HisG and HisZ subunits.

It localises to the cytoplasm. It carries out the reaction 1-(5-phospho-beta-D-ribosyl)-ATP + diphosphate = 5-phospho-alpha-D-ribose 1-diphosphate + ATP. Its pathway is amino-acid biosynthesis; L-histidine biosynthesis; L-histidine from 5-phospho-alpha-D-ribose 1-diphosphate: step 1/9. Catalyzes the condensation of ATP and 5-phosphoribose 1-diphosphate to form N'-(5'-phosphoribosyl)-ATP (PR-ATP). Has a crucial role in the pathway because the rate of histidine biosynthesis seems to be controlled primarily by regulation of HisG enzymatic activity. The protein is ATP phosphoribosyltransferase of Prochlorococcus marinus subsp. pastoris (strain CCMP1986 / NIES-2087 / MED4).